The following is a 258-amino-acid chain: Short-chain dehydrogenase reductase 3c (258 aa).

12–36 serves as a coordination point for NAD(+); sequence IITGGASGIGADAARLFTDHGAKVV. Ser144 is a binding site for substrate. The Proton acceptor role is filled by Tyr156.

It belongs to the short-chain dehydrogenases/reductases (SDR) family.

In Arabidopsis thaliana (Mouse-ear cress), this protein is Short-chain dehydrogenase reductase 3c (SDR3c).